A 661-amino-acid polypeptide reads, in one-letter code: CD180 antigen (661 aa).

The signal sequence occupies residues 1–23 (MAFDVSCFFWVVLFSAGCKVITS). The Extracellular segment spans residues 24 to 626 (WDQMCIEKEA…KLSDVKLSCG (603 aa)). Residues 33 to 53 (ANKTYNCENLGLSEIPDTLPN) form the LRRNT domain. 4 N-linked (GlcNAc...) asparagine glycosylation sites follow: N34, N53, N70, and N78. LRR repeat units follow at residues 54-75 (TTEF…TFSR), 78-99 (NLTF…TFQS), 102-123 (QLST…SLNG), 126-147 (SLKH…PVHN), 150-171 (NLES…KDFP), 174-195 (NLKV…DMRS), and 201-221 (NLSL…AFDS). N-linked (GlcNAc...) asparagine glycosylation is found at N201, N234, and N244. 5 LRR repeats span residues 275–296 (SVES…TFQC), 299–320 (QLQE…MKGL), 322–343 (LLKK…SAAN), 346–366 (SLTH…VGCL), and 371–391 (NLQT…CSLQ). 2 N-linked (GlcNAc...) asparagine glycosylation sites follow: N394 and N402. LRR repeat units lie at residues 397–418 (HLQT…AFKE), 421–442 (QLEL…SPFQ), 446–466 (FLQV…HLLA), 470–493 (VLRH…NLLQ), 497–518 (SLEV…AFHS), 521–544 (KMSH…SHLK), and 546–564 (IYLN…RLLP). N451 carries an N-linked (GlcNAc...) asparagine glycan. N573 carries N-linked (GlcNAc...) asparagine glycosylation. Residues 577-627 (NPLDCTCSNIHFLTWYKENLHKLEGSEETTCANPPSLRGVKLSDVKLSCGI) form the LRRCT domain. The chain crosses the membrane as a helical span at residues 627 to 650 (ITAIGIFFLIVFLLLLAILLFFAV). The Cytoplasmic portion of the chain corresponds to 651–661 (KYLLRWKYQHI).

It belongs to the Toll-like receptor family. As to quaternary structure, M-shaped tetramer of two CD180-LY86 heterodimers. In terms of tissue distribution, expressed mainly on mature peripherical B cells. Detected in spleen, lymph node and appendix. Not detected in pre-B and -T cells.

It localises to the cell membrane. May cooperate with MD-1 and TLR4 to mediate the innate immune response to bacterial lipopolysaccharide (LPS) in B-cells. Leads to NF-kappa-B activation. Also involved in the life/death decision of B-cells. The polypeptide is CD180 antigen (CD180) (Homo sapiens (Human)).